Reading from the N-terminus, the 375-residue chain is Homoserine O-succinyltransferase (375 aa).

In terms of domain architecture, AB hydrolase-1 spans 48 to 358; sequence NAVLVCHALS…PAGHDSFLLD (311 aa). Ser-154 acts as the Nucleophile in catalysis. Arg-224 contributes to the substrate binding site. Residues Asp-319 and His-352 contribute to the active site. Position 353 (Asp-353) interacts with substrate.

The protein belongs to the AB hydrolase superfamily. MetX family. As to quaternary structure, homodimer.

The protein resides in the cytoplasm. It carries out the reaction L-homoserine + succinyl-CoA = O-succinyl-L-homoserine + CoA. Its pathway is amino-acid biosynthesis; L-methionine biosynthesis via de novo pathway; O-succinyl-L-homoserine from L-homoserine: step 1/1. Functionally, transfers a succinyl group from succinyl-CoA to L-homoserine, forming succinyl-L-homoserine. This chain is Homoserine O-succinyltransferase, found in Azoarcus sp. (strain BH72).